Consider the following 248-residue polypeptide: tRNA (guanine-N(1)-)-methyltransferase (248 aa).

S-adenosyl-L-methionine contacts are provided by residues G113 and 133-138 (IGDYVL).

It belongs to the RNA methyltransferase TrmD family. As to quaternary structure, homodimer.

Its subcellular location is the cytoplasm. It catalyses the reaction guanosine(37) in tRNA + S-adenosyl-L-methionine = N(1)-methylguanosine(37) in tRNA + S-adenosyl-L-homocysteine + H(+). Its function is as follows. Specifically methylates guanosine-37 in various tRNAs. In Shewanella halifaxensis (strain HAW-EB4), this protein is tRNA (guanine-N(1)-)-methyltransferase.